The following is a 210-amino-acid chain: Protein-L-isoaspartate O-methyltransferase (210 aa).

The active site involves S60.

It belongs to the methyltransferase superfamily. L-isoaspartyl/D-aspartyl protein methyltransferase family.

Its subcellular location is the cytoplasm. The enzyme catalyses [protein]-L-isoaspartate + S-adenosyl-L-methionine = [protein]-L-isoaspartate alpha-methyl ester + S-adenosyl-L-homocysteine. Functionally, catalyzes the methyl esterification of L-isoaspartyl residues in peptides and proteins that result from spontaneous decomposition of normal L-aspartyl and L-asparaginyl residues. It plays a role in the repair and/or degradation of damaged proteins. This chain is Protein-L-isoaspartate O-methyltransferase, found in Xylella fastidiosa (strain M12).